The sequence spans 342 residues: MKQLESFEIPRTVIFGPGAISKIHQIVASQKASKILIITGRSVTLQYAKTIADMLTDRSVEVLRYDYIDIEKSGFDLVLGVGGGRPIDMAKVYSYVHKKPLVIVPTSASHDGIASPYVSYTLAQKMIKYGKIMASPIAIVADTSIILNAPSRLLKAGVGDLLGKIIAVRDWKLAHRLKGEEYSEYASHLSLTSYRIVVANAARIKNFVREEDVRVLVKALIGCGVAMGIAGSSRPCSGSEHLFAHAIEIRLEESGGDAIHGELVALGTIIMAYLHGINWRRVKKIAKLVGLPTTLREAGIDYDLAIEALVVAHTLRPDRYTILGDGLSKDAARRAIEATELA.

NAD(+) contacts are provided by residues 84–88 (GRPID) and 106–109 (TSAS). Residue Asp-111 participates in substrate binding. An NAD(+)-binding site is contributed by Ser-115. Asp-160 contributes to the substrate binding site. The Zn(2+) site is built by Asp-160 and His-241. A substrate-binding site is contributed by His-245. His-260 provides a ligand contact to Zn(2+).

It belongs to the glycerol-1-phosphate dehydrogenase family. As to quaternary structure, homodimer. Requires Zn(2+) as cofactor.

The protein resides in the cytoplasm. It carries out the reaction sn-glycerol 1-phosphate + NAD(+) = dihydroxyacetone phosphate + NADH + H(+). The enzyme catalyses sn-glycerol 1-phosphate + NADP(+) = dihydroxyacetone phosphate + NADPH + H(+). It functions in the pathway membrane lipid metabolism; glycerophospholipid metabolism. Its function is as follows. Catalyzes the NAD(P)H-dependent reduction of dihydroxyacetonephosphate (DHAP or glycerone phosphate) to glycerol 1-phosphate (G1P). The G1P thus generated is used as the glycerophosphate backbone of phospholipids in the cellular membranes of Archaea. This Pyrobaculum islandicum (strain DSM 4184 / JCM 9189 / GEO3) protein is Glycerol-1-phosphate dehydrogenase [NAD(P)+].